The primary structure comprises 733 residues: Oligopeptide transporter 8 (733 aa).

14 consecutive transmembrane segments (helical) span residues 42 to 62, 66 to 86, 115 to 135, 147 to 167, 209 to 229, 244 to 264, 281 to 301, 357 to 377, 413 to 433, 442 to 462, 531 to 551, 596 to 616, 644 to 664, and 677 to 697; these read MWVLGITACVLLSFLNQFFWY, PLTISSVSAQIAVVPIGHLMA, VLITVFANSGSGAVYATHILS, FLPALLVMITTQVLGFGWAGL, FFVITLITSFSYYLLPGYLFT, SILVNQLGSGSAGLGIGSFGL, FFASANIAAGFFLVMYVITPL, FAVTYGLGFATLSASIFHVLI, LWWFLSIFAVNLAVIVFICIY, WWGAFLACLIAIFFTPLVGVI, VGTLVAVIAYAGTAWWLMAEI, YSNINWFFVGGAIAPALVYLA, ASAVNFTSWLVMAFVFGHFVF, and VLSGGMDAGTGFMSVLLFLAL.

This sequence belongs to the oligopeptide OPT transporter (TC 2.A.67.1) family.

Its subcellular location is the membrane. In terms of biological role, may be involved in the translocation of tetra- and pentapeptides across the cellular membrane in an energy-dependent manner. In Arabidopsis thaliana (Mouse-ear cress), this protein is Oligopeptide transporter 8 (OPT8).